We begin with the raw amino-acid sequence, 366 residues long: Carboxy-cis,cis-muconate cyclase (366 aa).

Residues histidine 149, arginine 197, glutamate 213, and arginine 275 contribute to the active site.

It belongs to the cycloisomerase 2 family. In terms of assembly, homotetramer.

It carries out the reaction 3-carboxy-2,5-dihydro-5-oxofuran-2-acetate = 3-carboxy-cis,cis-muconate. Its pathway is aromatic compound metabolism; beta-ketoadipate pathway; 3-carboxy-cis,cis-muconate from 3-carboxy-2,5-dihydro-5-oxofuran-2-acetate: step 1/1. In terms of biological role, catalyzes a syn cycloisomerization. Also possesses mle activity. The protein is Carboxy-cis,cis-muconate cyclase of Neurospora crassa (strain ATCC 24698 / 74-OR23-1A / CBS 708.71 / DSM 1257 / FGSC 987).